Reading from the N-terminus, the 362-residue chain is Mortality factor 4-like protein 1 (362 aa).

Residues 12-51 (QEGERVLCFHGPLLYEAKCVKVAIKDKQVKYFIHYSGWNK) enclose the Tudor-knot domain. The interval 26–62 (YEAKCVKVAIKDKQVKYFIHYSGWNKKSAVRPRRSEK) is interaction with KAT8. Residues 113–182 (RELQKANQEQ…RKKRARVDPT (70 aa)) form a disordered region. The segment at 133–266 (PGKKTSGLQQ…VAGIKEYFNV (134 aa)) is sufficient for interaction with SIN3A. A Nuclear localization signal motif is present at residues 135 to 146 (KKTSGLQQKNVE). An N6-acetyllysine modification is found at Lys-143. The segment at 164 to 230 (STSETPQPPR…FYLPAKKNVD (67 aa)) is interaction with RB1-1. The segment at 188-342 (TFMNRVEVKV…FLKYLAKNSA (155 aa)) is sufficient for interaction with PHF12. Residues 191-362 (NRVEVKVKIP…APPEYHRKAV (172 aa)) enclose the MRG domain. The interval 323–344 (LALLLNYLHDFLKYLAKNSATL) is interaction with RB1-2.

Component of the NuA4 histone acetyltransferase complex which contains the catalytic subunit KAT5/TIP60 and the subunits EP400, TRRAP/PAF400, BRD8/SMAP, EPC1, DMAP1/DNMAP1, RUVBL1/TIP49, RUVBL2, ING3, actin, ACTL6A/BAF53A, MORF4L1/MRG15, MORF4L2/MRGX, MRGBP, YEATS4/GAS41, VPS72/YL1 and MEAF6. The NuA4 complex interacts with MYC and the adenovirus E1A protein. MORF4L1 may also participate in the formation of NuA4 related complexes which lack the KAT5/TIP60 catalytic subunit, but which include the SWI/SNF related protein SRCAP. Component of the mSin3A histone deacetylase complex, which includes SIN3A, HDAC2, ARID4B, MORF4L1, RBBP4/RbAp48, and RBBP7/RbAp46. May also interact with PHF12 and one or more as yet undefined members of the TLE (transducin-like enhancer of split) family of transcriptional repressors. Component of the SIN3B complex, which includes SIN3B, HDAC2 or HDAC1, PHF12 and MORF4L1. Interacts with RB1 and KAT8. Interacts with the N-terminus of MRFAP1. Found in a complex composed of MORF4L1, MRFAP1 and RB1. Interacts with the entire BRCA complex, which contains BRCA1, PALB2, BRCA2 and RAD51. Interacts with PALB2. Forms a complex with MSL1 and NUPR1.

It is found in the nucleus. In terms of biological role, component of the NuA4 histone acetyltransferase (HAT) complex which is involved in transcriptional activation of select genes principally by acetylation of nucleosomal histones H4 and H2A. This modification may both alter nucleosome - DNA interactions and promote interaction of the modified histones with other proteins which positively regulate transcription. This complex may be required for the activation of transcriptional programs associated with oncogene and proto-oncogene mediated growth induction, tumor suppressor mediated growth arrest and replicative senescence, apoptosis, and DNA repair. The NuA4 complex ATPase and helicase activities seem to be, at least in part, contributed by the association of RUVBL1 and RUVBL2 with EP400. NuA4 may also play a direct role in DNA repair when directly recruited to sites of DNA damage. As part of the SIN3B complex represses transcription and counteracts the histone acetyltransferase activity of EP300 through the recognition H3K27ac marks by PHF12 and the activity of the histone deacetylase HDAC2. SIN3B complex is recruited downstream of the constitutively active genes transcriptional start sites through interaction with histones and mitigates histone acetylation and RNA polymerase II progression within transcribed regions contributing to the regulation of transcription. Required for homologous recombination repair (HRR) and resistance to mitomycin C (MMC). Involved in the localization of PALB2, BRCA2 and RAD51, but not BRCA1, to DNA-damage foci. This is Mortality factor 4-like protein 1 from Homo sapiens (Human).